Reading from the N-terminus, the 386-residue chain is MNIHEYQGKEILKQYGVKVPEGRVAFTVEEAVEAAKELGTQVNVVKAQIHAGGRGKAGGVKVAKNLDEVRTYASEILGKVLVTHQTGPEGKEVKRLLIEQGCDIKKEYYVGVVVDRATGSVVMMASEEGGMDIEEVAANNPEKIFKEVVDPVTGLNGFQARRLAYAINIPKELINKAAKFMMSLYQAFVDKDASIAEINPLVVTGDGEVMALDAKLNFDSNALYRHPDIVALRDLDEEDEKEIEASKFDLSYIALDGNIGCMVNGAGLAMATMDIVKFYGGDPANFLDVGGGATEEKVTEAFKIILRDEKVKGIFVNIFGGIMKCDVIANGVVNAAKQIKLDKPLVVRLEGTNVDLGKKILNESGLNIVAAESMADGAEKIVSLVK.

An ATP-grasp domain is found at 9 to 244 (KEILKQYGVK…LDEEDEKEIE (236 aa)). ATP-binding positions include Lys46, 53 to 55 (GRG), Glu99, Cys102, and Glu107. 2 residues coordinate Mg(2+): Asn199 and Asp213. Residues Asn264 and 321-323 (GIM) each bind substrate.

Belongs to the succinate/malate CoA ligase beta subunit family. As to quaternary structure, heterotetramer of two alpha and two beta subunits. It depends on Mg(2+) as a cofactor.

The catalysed reaction is succinate + ATP + CoA = succinyl-CoA + ADP + phosphate. The enzyme catalyses GTP + succinate + CoA = succinyl-CoA + GDP + phosphate. Its pathway is carbohydrate metabolism; tricarboxylic acid cycle; succinate from succinyl-CoA (ligase route): step 1/1. Succinyl-CoA synthetase functions in the citric acid cycle (TCA), coupling the hydrolysis of succinyl-CoA to the synthesis of either ATP or GTP and thus represents the only step of substrate-level phosphorylation in the TCA. The beta subunit provides nucleotide specificity of the enzyme and binds the substrate succinate, while the binding sites for coenzyme A and phosphate are found in the alpha subunit. The protein is Succinate--CoA ligase [ADP-forming] subunit beta of Brevibacillus brevis (strain 47 / JCM 6285 / NBRC 100599).